Here is an 881-residue protein sequence, read N- to C-terminus: Phosphoinositide 3-kinase regulatory subunit 5 (881 aa).

The segment at 23–99 (SRDAVSSRWA…APHIPPDSEL (77 aa)) is heterodimerization. Disordered stretches follow at residues 312 to 339 (PVAS…ERDS) and 472 to 499 (PQAK…KLQT). Residues 316-330 (ENEEDEEEEEEDVET) show a composition bias toward acidic residues. The tract at residues 657 to 757 (PILADMILYY…WNDVEKVCTS (101 aa)) is interaction with G beta gamma proteins.

In terms of assembly, heterodimer. Interacts with a catalytic subunit and with G beta gamma proteins.

It localises to the nucleus. It is found in the cytoplasm. Its subcellular location is the cell membrane. Greatly activated by G gamma proteins. Functionally, regulatory subunit of the PI3K gamma complex. The protein is Phosphoinositide 3-kinase regulatory subunit 5 (PIK3R5) of Gallus gallus (Chicken).